A 271-amino-acid chain; its full sequence is Glutamate racemase (271 aa).

Substrate-binding positions include 12–13 and 44–45; these read DS and YG. Cysteine 75 (proton donor/acceptor) is an active-site residue. Substrate is bound at residue 76 to 77; the sequence is NS. The Proton donor/acceptor role is filled by cysteine 185. Position 186–187 (186–187) interacts with substrate; that stretch reads TH.

It belongs to the aspartate/glutamate racemases family.

The enzyme catalyses L-glutamate = D-glutamate. It participates in cell wall biogenesis; peptidoglycan biosynthesis. In terms of biological role, provides the (R)-glutamate required for cell wall biosynthesis. The sequence is that of Glutamate racemase from Mycobacterium bovis (strain BCG / Pasteur 1173P2).